Here is a 286-residue protein sequence, read N- to C-terminus: Polyamine aminopropyltransferase (286 aa).

The region spanning 5 to 238 is the PABS domain; the sequence is TMWHETLHDQ…GIMTFAWATD (234 aa). An S-methyl-5'-thioadenosine-binding site is contributed by glutamine 33. The spermidine site is built by histidine 64 and aspartate 88. S-methyl-5'-thioadenosine contacts are provided by residues glutamate 108 and 140–141; that span reads DG. Residue aspartate 158 is the Proton acceptor of the active site. Spermidine is bound at residue 158–161; the sequence is DCTD. Proline 165 is an S-methyl-5'-thioadenosine binding site.

Belongs to the spermidine/spermine synthase family. Homodimer or homotetramer.

It localises to the cytoplasm. It catalyses the reaction S-adenosyl 3-(methylsulfanyl)propylamine + putrescine = S-methyl-5'-thioadenosine + spermidine + H(+). The protein operates within amine and polyamine biosynthesis; spermidine biosynthesis; spermidine from putrescine: step 1/1. Its function is as follows. Catalyzes the irreversible transfer of a propylamine group from the amino donor S-adenosylmethioninamine (decarboxy-AdoMet) to putrescine (1,4-diaminobutane) to yield spermidine. The sequence is that of Polyamine aminopropyltransferase from Salmonella paratyphi A (strain ATCC 9150 / SARB42).